The chain runs to 358 residues: Vascular endothelial growth factor D (358 aa).

The N-terminal stretch at 1–21 is a signal peptide; the sequence is MYGEWGMGNILMMFHVYLVQG. The propeptide occupies 22–93; that stretch reads FRSEHGPVKD…SRSASHRSTR (72 aa). Cystine bridges form between C116–C158, C147–C194, and C151–C196. N160 and N190 each carry an N-linked (GlcNAc...) asparagine glycan. Positions 211 to 358 are excised as a propeptide; that stretch reads SIQTPEEDEC…AQGLYSQENP (148 aa). A 1; approximate repeat occupies 227–242; sequence CPIDMLWDNTKCKCVL. The tract at residues 227–323 is 4 X 16 AA repeats of C-X(10)-C-X-C-X(1,3)-C; sequence CPIDMLWDNT…PDTCSCEDRC (97 aa). Repeat copies occupy residues 263 to 278, 282 to 298, and 306 to 323. N-linked (GlcNAc...) asparagine glycosylation is present at N292.

This sequence belongs to the PDGF/VEGF growth factor family. Homodimer; non-covalent and antiparallel. Post-translationally, undergoes a complex proteolytic maturation which generates a variety of processed secreted forms with increased activity toward VEGFR-3 and VEGFR-2. VEGF-D first form an antiparallel homodimer linked by disulfide bonds before secretion. The fully processed VEGF-D is composed mostly of two VEGF homology domains (VHDs) bound by non-covalent interactions. In terms of tissue distribution, highly expressed in fetal and adult lung.

It is found in the secreted. Its function is as follows. Growth factor active in angiogenesis, lymphangiogenesis and endothelial cell growth, stimulating their proliferation and migration and also has effects on the permeability of blood vessels. May function in the formation of the venous and lymphatic vascular systems during embryogenesis, and also in the maintenance of differentiated lymphatic endothelium in adults. Binds and activates VEGFR-3 (Flt4) receptor. The polypeptide is Vascular endothelial growth factor D (Mus musculus (Mouse)).